Reading from the N-terminus, the 135-residue chain is Lysozyme 2 (135 aa).

A signal peptide spans 1-18; that stretch reads MNFLILFCVVASASVVYS. The I-type lysozyme domain occupies 19–135; that stretch reads SISDQCLRCI…WRLVQAKGCS (117 aa). 6 cysteine pairs are disulfide-bonded: cysteine 24-cysteine 100, cysteine 29-cysteine 35, cysteine 40-cysteine 49, cysteine 62-cysteine 82, cysteine 72-cysteine 78, and cysteine 96-cysteine 114. The active-site Proton donor is glutamate 32. Aspartate 43 serves as the catalytic Nucleophile. 55 to 61 serves as a coordination point for substrate; that stretch reads KQGYWTD. Residues tyrosine 86 and 107 to 109 contribute to the substrate site; that span reads HNG.

As to expression, expressed in the epithelia of the basophil cells in the digestive tubules, but not in the epithelial cells lining the digestive ducts and stomach. Expressed at a much lower level in the style sac-midgut tissues. No expression detected in mantle, gills, labial palps or hemocytes.

It localises to the secreted. It carries out the reaction Hydrolysis of (1-&gt;4)-beta-linkages between N-acetylmuramic acid and N-acetyl-D-glucosamine residues in a peptidoglycan and between N-acetyl-D-glucosamine residues in chitodextrins.. Activity decreased by 80% by addition of 0.01 M calcium, zinc or magnesium. Activity only decreased by 17% by addition of ammonium, and by 2% by addition of sodium. The main role of this lysozyme is in digestion. Has antibacterial activity against the Gram-positive bacterium P.cerevisiae and the Gram-negative bacteria E.coli and V.vulnificus. Shows some chitinase activity but no isopeptidase activity. This is Lysozyme 2 from Crassostrea virginica (Eastern oyster).